Reading from the N-terminus, the 87-residue chain is MSASADSLAAAASLDKYGDEDIFSLLIRYGLYVGALFQFVCISAAVLMENNPDSQSNPETGEVTEREGEPVRTRLHKIRKLEKKKRR.

A helical transmembrane segment spans residues 25–47 (LLIRYGLYVGALFQFVCISAAVL). The disordered stretch occupies residues 50–87 (NNPDSQSNPETGEVTEREGEPVRTRLHKIRKLEKKKRR). The segment covering 63-72 (VTEREGEPVR) has biased composition (basic and acidic residues). Residues 73–87 (TRLHKIRKLEKKKRR) are compositionally biased toward basic residues.

This sequence belongs to the UPF0239 family.

The protein resides in the membrane. The chain is Protein anon-73B1 (anon-73B1) from Drosophila simulans (Fruit fly).